A 465-amino-acid polypeptide reads, in one-letter code: Cysteine--tRNA ligase (465 aa).

Zn(2+) is bound at residue C30. Positions 32 to 42 (ITVYDYCHVGH) match the 'HIGH' region motif. Positions 214, 239, and 243 each coordinate Zn(2+). The 'KMSKS' region motif lies at 271-275 (KMSKS). K274 contributes to the ATP binding site.

It belongs to the class-I aminoacyl-tRNA synthetase family. Monomer. Zn(2+) serves as cofactor.

It is found in the cytoplasm. It carries out the reaction tRNA(Cys) + L-cysteine + ATP = L-cysteinyl-tRNA(Cys) + AMP + diphosphate. The sequence is that of Cysteine--tRNA ligase from Burkholderia multivorans (strain ATCC 17616 / 249).